Consider the following 1131-residue polypeptide: Kinesin-like protein CG14535 (1131 aa).

Residues M1–R11 are compositionally biased toward polar residues. The disordered stretch occupies residues M1–P25. A Kinesin motor domain is found at K44 to L396. 4 disordered regions span residues A472–K494, D693–I753, P905–L926, and T1016–R1072. A compositionally biased stretch (low complexity) spans S483 to K494. Over residues T1016 to R1032 the composition is skewed to polar residues.

It belongs to the TRAFAC class myosin-kinesin ATPase superfamily. Kinesin family. KIF26 subfamily.

Its subcellular location is the cytoplasm. The protein resides in the cytoskeleton. This Drosophila melanogaster (Fruit fly) protein is Kinesin-like protein CG14535.